The sequence spans 278 residues: 4-deoxy-L-threo-5-hexosulose-uronate ketol-isomerase (278 aa).

Residues His-196, His-198, Glu-203, and His-245 each contribute to the Zn(2+) site.

This sequence belongs to the KduI family. The cofactor is Zn(2+).

The enzyme catalyses 5-dehydro-4-deoxy-D-glucuronate = 3-deoxy-D-glycero-2,5-hexodiulosonate. The protein operates within glycan metabolism; pectin degradation; 2-dehydro-3-deoxy-D-gluconate from pectin: step 4/5. Functionally, catalyzes the isomerization of 5-dehydro-4-deoxy-D-glucuronate to 3-deoxy-D-glycero-2,5-hexodiulosonate. The protein is 4-deoxy-L-threo-5-hexosulose-uronate ketol-isomerase of Shigella boydii serotype 4 (strain Sb227).